The sequence spans 101 residues: Small ribosomal subunit protein uS14 (101 aa).

This sequence belongs to the universal ribosomal protein uS14 family. In terms of assembly, part of the 30S ribosomal subunit. Contacts proteins S3 and S10.

In terms of biological role, binds 16S rRNA, required for the assembly of 30S particles and may also be responsible for determining the conformation of the 16S rRNA at the A site. The protein is Small ribosomal subunit protein uS14 of Pseudomonas putida (strain ATCC 47054 / DSM 6125 / CFBP 8728 / NCIMB 11950 / KT2440).